We begin with the raw amino-acid sequence, 88 residues long: Probable Fe(2+)-trafficking protein (88 aa).

This sequence belongs to the Fe(2+)-trafficking protein family.

In terms of biological role, could be a mediator in iron transactions between iron acquisition and iron-requiring processes, such as synthesis and/or repair of Fe-S clusters in biosynthetic enzymes. This Neisseria gonorrhoeae (strain ATCC 700825 / FA 1090) protein is Probable Fe(2+)-trafficking protein.